A 175-amino-acid polypeptide reads, in one-letter code: Ribosome-binding factor A (175 aa).

Positions 125-175 are disordered; it reads TAKHAGEADPYKSDAPEDVDIDEDDFDEEDIDLAGDDDIDEDANKDADSSK. The span at 128–139 shows a compositional bias: basic and acidic residues; the sequence is HAGEADPYKSDA. Acidic residues predominate over residues 140–165; it reads PEDVDIDEDDFDEEDIDLAGDDDIDE. A compositionally biased stretch (basic and acidic residues) spans 166–175; the sequence is DANKDADSSK.

The protein belongs to the RbfA family. As to quaternary structure, monomer. Binds 30S ribosomal subunits, but not 50S ribosomal subunits or 70S ribosomes.

It is found in the cytoplasm. Functionally, one of several proteins that assist in the late maturation steps of the functional core of the 30S ribosomal subunit. Associates with free 30S ribosomal subunits (but not with 30S subunits that are part of 70S ribosomes or polysomes). Required for efficient processing of 16S rRNA. May interact with the 5'-terminal helix region of 16S rRNA. The protein is Ribosome-binding factor A of Pseudarthrobacter chlorophenolicus (strain ATCC 700700 / DSM 12829 / CIP 107037 / JCM 12360 / KCTC 9906 / NCIMB 13794 / A6) (Arthrobacter chlorophenolicus).